The chain runs to 141 residues: HTH-type transcriptional repressor NsrR (141 aa).

The HTH rrf2-type domain maps to 2–129 (QLTSFTDYGL…DSHTLADMVE (128 aa)). A DNA-binding region (H-T-H motif) is located at residues 28 to 51 (ISEVTEVYGVSRNHMVKIINQLSR). Cys91, Cys96, and Cys102 together coordinate [2Fe-2S] cluster.

Requires [2Fe-2S] cluster as cofactor.

Its function is as follows. Nitric oxide-sensitive repressor of genes involved in protecting the cell against nitrosative stress. May require iron for activity. This Serratia proteamaculans (strain 568) protein is HTH-type transcriptional repressor NsrR.